The following is a 576-amino-acid chain: Low-affinity glucose transporter HXT4 (576 aa).

The segment at 1–56 is disordered; sequence MSEEAAYQEDTAVQNTPADALSPVESDSNSALSTPSNKAERDDMKDFDENHEESNN. Residues 1–66 lie on the Cytoplasmic side of the membrane; it reads MSEEAAYQED…YVEIPKKPAS (66 aa). Positions 25 to 37 are enriched in polar residues; it reads ESDSNSALSTPSN. Residues 38–54 are compositionally biased toward basic and acidic residues; sequence KAERDDMKDFDENHEES. K45 is covalently cross-linked (Glycyl lysine isopeptide (Lys-Gly) (interchain with G-Cter in ubiquitin)). Residues 67-87 traverse the membrane as a helical segment; sequence AYVTVSICCLMVAFGGFVFGW. Topologically, residues 88–122 are extracellular; the sequence is DTGTISGFVAQTDFIRRFGMKHHDGTYYLSKVRTG. A helical membrane pass occupies residues 123–143; sequence LMVSIINIGCAIGGIILAKLG. Topologically, residues 144-149 are cytoplasmic; sequence DMYGRK. The helical transmembrane segment at 150–170 threads the bilayer; sequence MGLIVVVVIYIIGIIIQIASI. Topologically, residues 171-180 are extracellular; it reads NKWYQYFIGR. The helical transmembrane segment at 181 to 201 threads the bilayer; the sequence is IISGLGVGGIAVLSPMLISEV. The Cytoplasmic segment spans residues 202–207; sequence SPKHIR. Residues 208 to 228 traverse the membrane as a helical segment; the sequence is GTLVSCYQLMITLGIFLGYCT. At 229 to 242 the chain is on the extracellular side; the sequence is NYGTKTYTNSVQWR. The helical transmembrane segment at 243–263 threads the bilayer; sequence VPLGLGFAWALFMIGGMTFVP. The Cytoplasmic segment spans residues 264–346; it reads ESPRYLVEVG…IQSLQQLTGD (83 aa). The helical transmembrane segment at 347–363 threads the bilayer; it reads NYFFYYGTTVFTAVGLS. Topologically, residues 364-369 are extracellular; that stretch reads DSFETS. The helical transmembrane segment at 370 to 387 threads the bilayer; the sequence is IVLGIVNFASTFVGIFLV. Over 388–394 the chain is Cytoplasmic; that stretch reads ERYGRRR. A helical transmembrane segment spans residues 395–415; the sequence is CLLWGAASMTACMVVFASVGV. Residues 416–437 lie on the Extracellular side of the membrane; sequence TRLWPNGKKNGSSKGAGNCMIV. N425 carries N-linked (GlcNAc...) asparagine glycosylation. Residues 438-458 traverse the membrane as a helical segment; sequence FTCFYLFCFATTWAPIPFVVN. Residues 459-475 are Cytoplasmic-facing; it reads SETFPLRVKSKCMAIAQ. The helical transmembrane segment at 476-496 threads the bilayer; sequence ACNWIWGFLIGFFTPFISNAI. A topological domain (extracellular) is located at residue D497. The helical transmembrane segment at 498 to 518 threads the bilayer; sequence FYYGYVFMGCLVFSYFYVFFF. Residues 519-576 are Cytoplasmic-facing; sequence VPETKGLTLEEVNTLWEEGVLPWKSPSWVPPNKRGTDYNADDLMHDDQPFYKKMFGKK.

Belongs to the major facilitator superfamily. Sugar transporter (TC 2.A.1.1) family.

Its subcellular location is the cell membrane. Xylose uptake is strongly inhibited by glucose. Functionally, low-affinity glucose transporter. Can also transport xylose. This chain is Low-affinity glucose transporter HXT4 (HXT4), found in Saccharomyces cerevisiae (strain JAY291) (Baker's yeast).